A 208-amino-acid chain; its full sequence is Large ribosomal subunit protein uL4 (208 aa).

Residues 45 to 95 (RQGTHKAKTRSEVRGGGKKPFRQKGTGNARQGSSRSPIHVGGGTIFGPQPH) are disordered. Positions 69–80 (GTGNARQGSSRS) are enriched in polar residues.

It belongs to the universal ribosomal protein uL4 family. In terms of assembly, part of the 50S ribosomal subunit.

Functionally, one of the primary rRNA binding proteins, this protein initially binds near the 5'-end of the 23S rRNA. It is important during the early stages of 50S assembly. It makes multiple contacts with different domains of the 23S rRNA in the assembled 50S subunit and ribosome. In terms of biological role, forms part of the polypeptide exit tunnel. This is Large ribosomal subunit protein uL4 from Chlorobium chlorochromatii (strain CaD3).